Consider the following 428-residue polypeptide: Flotillin-2a (428 aa).

3 S-palmitoyl cysteine lipidation sites follow: Cys4, Cys19, and Cys20.

It belongs to the band 7/mec-2 family. Flotillin subfamily. In terms of assembly, heterooligomer; Heterooligomerizes with ic complex of flotillins 1 and 2. Palmitoylation may be required for the formation of higher order complexes and for neurite outgrowth in cultured neural stem cells.

It localises to the membrane. The protein resides in the endosome. May play a role in axon growth and regeneration. May be involved in epidermal cell adhesion and epidermal structure and function. The protein is Flotillin-2a (flot2a) of Danio rerio (Zebrafish).